The following is a 224-amino-acid chain: Peroxiredoxin-6 (224 aa).

One can recognise a Thioredoxin domain in the interval Leu5–Leu169. A required and sufficient for targeting to lysosomes and lamellar bodies region spans residues Asp31–Pro40. Phosphothreonine is present on Thr44. Cys47 functions as the Cysteine sulfenic acid (-SOH) intermediate; for peroxidase activity in the catalytic mechanism. Lys63 carries the N6-acetyllysine modification. Position 89 is a phosphotyrosine (Tyr89). The active-site For phospholipase activity is the Asp140. Phosphothreonine; by MAPK is present on Thr177. An N6-acetyllysine; alternate modification is found at Lys209. Lys209 carries the post-translational modification N6-succinyllysine; alternate.

This sequence belongs to the peroxiredoxin family. Prx6 subfamily. Homodimer. Interacts with GSTP1; mediates PRDX6 glutathionylation and regeneration. Interacts with APEX1. Interacts with STH. May interact with FAM168B. May interact with HTR2A. In terms of processing, irreversibly inactivated by overoxidation of Cys-47 to sulfinic acid (Cys-SO(2)H) and sulfonic acid (Cys-SO(3)H) forms upon oxidative stress. Phosphorylation at Thr-177 by MAP kinases increases the phospholipase activity of the enzyme. The phosphorylated form exhibits a greater lysophosphatidylcholine acyltransferase activity compared to the non-phosphorylated form.

It is found in the cytoplasm. The protein localises to the lysosome. The enzyme catalyses a hydroperoxide + 2 glutathione = an alcohol + glutathione disulfide + H2O. The catalysed reaction is a 1,2-diacyl-sn-glycero-3-phosphocholine + H2O = a 1-acyl-sn-glycero-3-phosphocholine + a fatty acid + H(+). It catalyses the reaction a 1-acyl-sn-glycero-3-phosphocholine + an acyl-CoA = a 1,2-diacyl-sn-glycero-3-phosphocholine + CoA. It carries out the reaction 1-hexadecanoyl-sn-glycero-3-phosphocholine + hexadecanoyl-CoA = 1,2-dihexadecanoyl-sn-glycero-3-phosphocholine + CoA. The enzyme catalyses 1,2-dihexadecanoyl-sn-glycero-3-phosphocholine + H2O = 1-hexadecanoyl-sn-glycero-3-phosphocholine + hexadecanoate + H(+). In terms of biological role, thiol-specific peroxidase that catalyzes the reduction of hydrogen peroxide and organic hydroperoxides to water and alcohols, respectively. Can reduce H(2)O(2) and short chain organic, fatty acid, and phospholipid hydroperoxides. Also has phospholipase activity, and can therefore either reduce the oxidized sn-2 fatty acyl group of phospholipids (peroxidase activity) or hydrolyze the sn-2 ester bond of phospholipids (phospholipase activity). These activities are dependent on binding to phospholipids at acidic pH and to oxidized phospholipds at cytosolic pH. Plays a role in cell protection against oxidative stress by detoxifying peroxides and in phospholipid homeostasis. Exhibits acyl-CoA-dependent lysophospholipid acyltransferase which mediates the conversion of lysophosphatidylcholine (1-acyl-sn-glycero-3-phosphocholine or LPC) into phosphatidylcholine (1,2-diacyl-sn-glycero-3-phosphocholine or PC). Shows a clear preference for LPC as the lysophospholipid and for palmitoyl CoA as the fatty acyl substrate. The chain is Peroxiredoxin-6 (PRDX6) from Sus scrofa (Pig).